The chain runs to 269 residues: Putative 12-oxophytodienoate reductase-like protein 2A (269 aa).

Residues 28–30 and glutamine 103 contribute to the FMN site; that span reads PLT. Residue 175–178 coordinates substrate; that stretch reads HGAH. Tyrosine 180 (proton donor) is an active-site residue. Arginine 227 provides a ligand contact to FMN.

Belongs to the NADH:flavin oxidoreductase/NADH oxidase family. FMN serves as cofactor.

Its function is as follows. Putative oxophytodienoate reductase that may be involved in the biosynthesis or metabolism of oxylipin signaling molecules. This Arabidopsis thaliana (Mouse-ear cress) protein is Putative 12-oxophytodienoate reductase-like protein 2A.